Reading from the N-terminus, the 398-residue chain is Chalcone synthase (398 aa).

Residue Cys167 is part of the active site.

Belongs to the thiolase-like superfamily. Chalcone/stilbene synthases family.

The enzyme catalyses (E)-4-coumaroyl-CoA + 3 malonyl-CoA + 3 H(+) = 2',4,4',6'-tetrahydroxychalcone + 3 CO2 + 4 CoA. It participates in secondary metabolite biosynthesis; flavonoid biosynthesis. Functionally, the primary product of this enzyme is 4,2',4',6'-tetrahydroxychalcone (also termed naringenin-chalcone or chalcone) which can under specific conditions spontaneously isomerize into naringenin. The chain is Chalcone synthase (CHS) from Callistephus chinensis (China aster).